We begin with the raw amino-acid sequence, 204 residues long: Flavin-dependent thymidylate synthase (204 aa).

The region spanning 1–204 is the ThyX domain; the sequence is MTVTLMQHTS…RYLFCLNQEG (204 aa). Residues Ser50 and 74 to 76 each bind FAD; that span reads RHR. DUMP contacts are provided by residues 71–74, 84–86, and Lys143; these read ELAR and SSR. The ThyX motif motif lies at 74–84; that stretch reads RHRIASLSVKS. FAD-binding positions include 159 to 161 and Asn165; that span reads NAR. A dUMP-binding site is contributed by Arg170. Arg170 functions as the Involved in ionization of N3 of dUMP, leading to its activation in the catalytic mechanism.

This sequence belongs to the thymidylate synthase ThyX family. Homotetramer. Requires FAD as cofactor.

It catalyses the reaction dUMP + (6R)-5,10-methylene-5,6,7,8-tetrahydrofolate + NADPH + H(+) = dTMP + (6S)-5,6,7,8-tetrahydrofolate + NADP(+). Its pathway is pyrimidine metabolism; dTTP biosynthesis. Its function is as follows. Catalyzes the reductive methylation of 2'-deoxyuridine-5'-monophosphate (dUMP) to 2'-deoxythymidine-5'-monophosphate (dTMP) while utilizing 5,10-methylenetetrahydrofolate (mTHF) as the methyl donor, and NADPH and FADH(2) as the reductant. The polypeptide is Flavin-dependent thymidylate synthase (Wolinella succinogenes (strain ATCC 29543 / DSM 1740 / CCUG 13145 / JCM 31913 / LMG 7466 / NCTC 11488 / FDC 602W) (Vibrio succinogenes)).